We begin with the raw amino-acid sequence, 528 residues long: Probable feruloyl esterase B-1 (528 aa).

Positions 1-19 (MMWWFLLIGLASAAATASS) are cleaved as a signal peptide. Disulfide bonds link C29/C78, C64/C117, C190/C445, C259/C276, C285/C295, and C505/C527. N-linked (GlcNAc...) asparagine glycans are attached at residues N83 and N101. The active-site Acyl-ester intermediate is the S191. Residues D260, D263, A265, D267, and I269 each coordinate Ca(2+). N-linked (GlcNAc...) asparagine glycans are attached at residues N286, N354, and N385. Residues D404 and H444 each act as charge relay system in the active site.

Belongs to the tannase family.

It is found in the secreted. It catalyses the reaction feruloyl-polysaccharide + H2O = ferulate + polysaccharide.. Involved in degradation of plant cell walls. Hydrolyzes the feruloyl-arabinose ester bond in arabinoxylans as well as the feruloyl-galactose and feruloyl-arabinose ester bonds in pectin. The polypeptide is Probable feruloyl esterase B-1 (faeB-1) (Aspergillus fumigatus (strain ATCC MYA-4609 / CBS 101355 / FGSC A1100 / Af293) (Neosartorya fumigata)).